The chain runs to 1170 residues: Short transient receptor potential channel 2 (1170 aa).

Over 1–627 the chain is Cytoplasmic; that stretch reads MLMSLTDSKE…GWRGSTTIWK (627 aa). Disordered regions lie at residues 64 to 113, 142 to 231, and 322 to 342; these read SLSD…QTST, AHKA…QATG, and ESGSDPSGAGPGGPLRNVEES. A compositionally biased stretch (polar residues) spans 74-85; it reads SPGSSGLNQNSS. The span at 158-177 shows a compositional bias: basic and acidic residues; the sequence is GEPDSSHPERAEPRAEEPNR. 4 ANK repeats span residues 300 to 329, 346 to 376, 377 to 405, and 429 to 458; these read KFPPTLLRAIQEGQLGLVQQLLESGSDPSG, SWREALNLAIRLGHEVITDVLLANVKFDFRQ, IHEALLVAVDTNQPAVVRRLLARLEREKG, and PGVTPLTLACQKDLYEIAQLLMDQGHTIAR. The chain crosses the membrane as a helical span at residues 628–648; the sequence is LFVAFLIFLTMPFLCIGYWLA. Over 649 to 658 the chain is Extracellular; sequence PKSRLGRLLK. The chain crosses the membrane as a helical span at residues 659 to 679; the sequence is IPVLKFLLHSASYLWFLIFLL. Over 680-701 the chain is Cytoplasmic; the sequence is GESLVMETQLSTFKGRSQSVWE. A helical membrane pass occupies residues 702 to 722; the sequence is TSLHMIWVTGFLWFECKEVWI. Residues 723-737 lie on the Extracellular side of the membrane; sequence EGLRSYLLDWWNFLD. A helical transmembrane segment spans residues 738–758; that stretch reads VVILSLYLASFALRLLLAGLA. The Cytoplasmic segment spans residues 759–788; it reads YMHCRDASDSSTCRYFTTAERSEWRTEDPQ. The helical transmembrane segment at 789-809 threads the bilayer; the sequence is FLAEVLFAVTSMLSFTRLAYI. The Extracellular segment spans residues 810–832; the sequence is LPAHESLGTLQISIGKMIDDMIR. A helical membrane pass occupies residues 833 to 853; it reads FMFILMIILTAFLCGLNNIYV. The Cytoplasmic segment spans residues 854-898; it reads PYQETEKLGNFNETFQFLFWTMFGMEEHSVVDMPQFLVPEFVGRA. The chain crosses the membrane as a helical span at residues 899-919; that stretch reads MYGIFTIVMVIVLLNMLIAMI. At 920–1170 the chain is on the extracellular side; it reads TNSFQKIEDD…GEDLETKGES (251 aa). Residues 1030-1068 are a coiled coil; sequence RREFEETRRKDLGNRLTELTKTVSRLQSEVASVQKTVAA. The tract at residues 1118–1170 is disordered; that stretch reads LEDSLDATGEAGTPASGESSSSSSAHVLVHREQEAEGAGDLPLGEDLETKGES.

This sequence belongs to the transient receptor (TC 1.A.4) family. STrpC subfamily. TRPC2 sub-subfamily. In terms of tissue distribution, expressed exclusively in vomeronasal organ neurons (sensory microvilli).

The protein resides in the membrane. In terms of biological role, thought to form a receptor-activated calcium permeant cation channel. Probably is operated by a phosphatidylinositol second messenger system activated by receptor tyrosine kinases or G-protein coupled receptors. Is not activated by intracellular calcium store depletion. This chain is Short transient receptor potential channel 2 (Trpc2), found in Rattus norvegicus (Rat).